A 130-amino-acid chain; its full sequence is MARPTKKTGTKKQKKNVPNGIAHIQSTFNNTIVTIADTKGDVVSWASAGSSGFKGAKKGTPFAAQTAADAAARRAIDQGMRQIEVMVSGPGAGRETAIRALQGAGLEITLIRDVTPIPHNGCRPPKRRRV.

The protein belongs to the universal ribosomal protein uS11 family. As to quaternary structure, part of the 30S ribosomal subunit. Interacts with proteins S7 and S18. Binds to IF-3.

Located on the platform of the 30S subunit, it bridges several disparate RNA helices of the 16S rRNA. Forms part of the Shine-Dalgarno cleft in the 70S ribosome. This Rippkaea orientalis (strain PCC 8801 / RF-1) (Cyanothece sp. (strain PCC 8801)) protein is Small ribosomal subunit protein uS11.